Here is a 245-residue protein sequence, read N- to C-terminus: tRNA (guanine-N(1)-)-methyltransferase (245 aa).

S-adenosyl-L-methionine is bound by residues Gly111 and 131 to 136 (IGDYVL).

It belongs to the RNA methyltransferase TrmD family. In terms of assembly, homodimer.

It is found in the cytoplasm. It catalyses the reaction guanosine(37) in tRNA + S-adenosyl-L-methionine = N(1)-methylguanosine(37) in tRNA + S-adenosyl-L-homocysteine + H(+). Its function is as follows. Specifically methylates guanosine-37 in various tRNAs. The chain is tRNA (guanine-N(1)-)-methyltransferase from Caldicellulosiruptor saccharolyticus (strain ATCC 43494 / DSM 8903 / Tp8T 6331).